The primary structure comprises 429 residues: Citrate synthase, chromosomal (429 aa).

Catalysis depends on residues His-306 and Asp-364.

The protein belongs to the citrate synthase family.

It carries out the reaction oxaloacetate + acetyl-CoA + H2O = citrate + CoA + H(+). Its pathway is carbohydrate metabolism; tricarboxylic acid cycle; isocitrate from oxaloacetate: step 1/2. In Rhizobium tropici, this protein is Citrate synthase, chromosomal (ccsA).